Here is a 208-residue protein sequence, read N- to C-terminus: Large ribosomal subunit protein uL4 (208 aa).

The interval 44 to 79 is disordered; sequence QRQGTHKSKERSEISGSTRKIGRQKGGGGARRGDMN.

This sequence belongs to the universal ribosomal protein uL4 family. As to quaternary structure, part of the 50S ribosomal subunit.

One of the primary rRNA binding proteins, this protein initially binds near the 5'-end of the 23S rRNA. It is important during the early stages of 50S assembly. It makes multiple contacts with different domains of the 23S rRNA in the assembled 50S subunit and ribosome. In terms of biological role, forms part of the polypeptide exit tunnel. The polypeptide is Large ribosomal subunit protein uL4 (Bacteroides thetaiotaomicron (strain ATCC 29148 / DSM 2079 / JCM 5827 / CCUG 10774 / NCTC 10582 / VPI-5482 / E50)).